Consider the following 514-residue polypeptide: 2,3-bisphosphoglycerate-independent phosphoglycerate mutase (514 aa).

Residues aspartate 12 and serine 62 each coordinate Mn(2+). The active-site Phosphoserine intermediate is the serine 62. Substrate-binding positions include histidine 123, 153-154 (RD), arginine 185, arginine 191, 260-263 (RPDR), and lysine 335. Mn(2+) contacts are provided by aspartate 402, histidine 406, aspartate 443, histidine 444, and histidine 462.

The protein belongs to the BPG-independent phosphoglycerate mutase family. As to quaternary structure, monomer. It depends on Mn(2+) as a cofactor.

The catalysed reaction is (2R)-2-phosphoglycerate = (2R)-3-phosphoglycerate. The protein operates within carbohydrate degradation; glycolysis; pyruvate from D-glyceraldehyde 3-phosphate: step 3/5. Catalyzes the interconversion of 2-phosphoglycerate and 3-phosphoglycerate. The protein is 2,3-bisphosphoglycerate-independent phosphoglycerate mutase of Lachnoclostridium phytofermentans (strain ATCC 700394 / DSM 18823 / ISDg) (Clostridium phytofermentans).